A 607-amino-acid polypeptide reads, in one-letter code: Actin-related protein 5 (607 aa).

A Glycyl lysine isopeptide (Lys-Gly) (interchain with G-Cter in SUMO2) cross-link involves residue K283. 2 coiled-coil regions span residues 288–327 (TLTS…LDRL) and 355–384 (EELQ…NLEV). Low complexity predominate over residues 584–596 (SRSSDAQASSKGS). The segment at 584–607 (SRSSDAQASSKGSAAGGGGAGEQA) is disordered. Gly residues predominate over residues 597 to 607 (AAGGGGAGEQA).

Belongs to the actin family. ARP5 subfamily. In terms of assembly, component of the chromatin remodeling INO80 complex; specifically part of a complex module associated with the helicase ATP-binding and the helicase C-terminal domain of INO80. Interacts with DDB1. Interacts with ACTR8; the interaction is observed in asynchronous (interphase) cells but not in metaphase-arrested cells indicative for a possible dissociation of the INO80 complex in mitotic cells.

Its subcellular location is the nucleus. The protein localises to the cytoplasm. Its function is as follows. Proposed core component of the chromatin remodeling INO80 complex which is involved in transcriptional regulation, DNA replication and probably DNA repair. Involved in DNA double-strand break repair and UV-damage excision repair. The sequence is that of Actin-related protein 5 (ACTR5) from Homo sapiens (Human).